We begin with the raw amino-acid sequence, 255 residues long: NADH dehydrogenase [ubiquinone] flavoprotein 2, mitochondrial (255 aa).

The transit peptide at 1-35 directs the protein to the mitochondrion; that stretch reads MLARLAAKRLLEIRQVFRQPTSQVTRSLSTALNYH. [2Fe-2S] cluster contacts are provided by cysteine 130, cysteine 135, cysteine 171, and cysteine 175. Positions 214–255 are disordered; the sequence is RKGEKPPHGTQNPKRIKCGPEGGNKTLLGEPKPPQFRDLDAC.

It belongs to the complex I 24 kDa subunit family. In terms of assembly, complex I is composed of at least 49 different subunits. This is a component of the flavoprotein-sulfur (FP) fragment of the enzyme. Requires [2Fe-2S] cluster as cofactor.

It is found in the mitochondrion inner membrane. The enzyme catalyses a ubiquinone + NADH + 5 H(+)(in) = a ubiquinol + NAD(+) + 4 H(+)(out). In terms of biological role, core subunit of the mitochondrial membrane respiratory chain NADH dehydrogenase (Complex I) that is believed to belong to the minimal assembly required for catalysis. Complex I functions in the transfer of electrons from NADH to the respiratory chain. The immediate electron acceptor for the enzyme is believed to be ubiquinone. The protein is NADH dehydrogenase [ubiquinone] flavoprotein 2, mitochondrial of Arabidopsis thaliana (Mouse-ear cress).